A 376-amino-acid polypeptide reads, in one-letter code: Chaperone protein DnaJ (376 aa).

A J domain is found at 5-72; that stretch reads DFYEVLGVPK…QKRAAYDQYG (68 aa). The segment at 136–214 adopts a CR-type zinc-finger fold; the sequence is GKEAQIRIPS…CHGQGRVKKQ (79 aa). Zn(2+) contacts are provided by cysteine 149, cysteine 152, cysteine 166, cysteine 169, cysteine 188, cysteine 191, cysteine 202, and cysteine 205. CXXCXGXG motif repeat units lie at residues 149 to 156, 166 to 173, 188 to 195, and 202 to 209; these read CETCHGSG, CGTCQGSG, CPHCRGTG, and CTACHGQG. Disordered regions lie at residues 227-246 and 352-376; these read DGMRIRSTGNGEPGTNGGPP and SLKKGGAKHSPSTESWTDRLKSFFS. Over residues 237-246 the composition is skewed to gly residues; the sequence is GEPGTNGGPP. Basic and acidic residues predominate over residues 367 to 376; sequence WTDRLKSFFS.

The protein belongs to the DnaJ family. In terms of assembly, homodimer. Zn(2+) is required as a cofactor.

Its subcellular location is the cytoplasm. Participates actively in the response to hyperosmotic and heat shock by preventing the aggregation of stress-denatured proteins and by disaggregating proteins, also in an autonomous, DnaK-independent fashion. Unfolded proteins bind initially to DnaJ; upon interaction with the DnaJ-bound protein, DnaK hydrolyzes its bound ATP, resulting in the formation of a stable complex. GrpE releases ADP from DnaK; ATP binding to DnaK triggers the release of the substrate protein, thus completing the reaction cycle. Several rounds of ATP-dependent interactions between DnaJ, DnaK and GrpE are required for fully efficient folding. Also involved, together with DnaK and GrpE, in the DNA replication of plasmids through activation of initiation proteins. The protein is Chaperone protein DnaJ of Acidovorax sp. (strain JS42).